We begin with the raw amino-acid sequence, 397 residues long: Elongation factor Tu (397 aa).

Residues 10–206 (KPHVNIGTIG…AVDEYIPTPE (197 aa)) enclose the tr-type G domain. The G1 stretch occupies residues 19 to 26 (GHVDHGKT). 19-26 (GHVDHGKT) contacts GTP. Thr-26 is a binding site for Mg(2+). The segment at 60 to 64 (GITIS) is G2. Residues 81–84 (DCPG) form a G3 region. Residues 81-85 (DCPGH) and 136-139 (NKAD) contribute to the GTP site. The tract at residues 136 to 139 (NKAD) is G4. Residues 174–176 (SAL) are G5.

This sequence belongs to the TRAFAC class translation factor GTPase superfamily. Classic translation factor GTPase family. EF-Tu/EF-1A subfamily. In terms of assembly, monomer.

It is found in the cytoplasm. It carries out the reaction GTP + H2O = GDP + phosphate + H(+). In terms of biological role, GTP hydrolase that promotes the GTP-dependent binding of aminoacyl-tRNA to the A-site of ribosomes during protein biosynthesis. This is Elongation factor Tu from Clostridium tetani (strain Massachusetts / E88).